A 142-amino-acid chain; its full sequence is Small ribosomal subunit protein uS9c (142 aa).

The protein belongs to the universal ribosomal protein uS9 family.

It is found in the plastid. The protein resides in the chloroplast. The sequence is that of Small ribosomal subunit protein uS9c (rps9) from Stigeoclonium helveticum (Green alga).